Consider the following 318-residue polypeptide: Ribose-phosphate pyrophosphokinase 3 (318 aa).

Position 96–101 (96–101) interacts with ATP; sequence RQDKKD. Mg(2+) is bound by residues Asp-128, His-130, Asp-139, and Asp-143. His-130 provides a ligand contact to ATP. The segment at 212-227 is binding of phosphoribosylpyrophosphate; it reads NDRVAILVDDMADTCV.

It belongs to the ribose-phosphate pyrophosphokinase family. Homodimer. The active form is probably a hexamer composed of 3 homodimers. The cofactor is Mg(2+). Testis.

It carries out the reaction D-ribose 5-phosphate + ATP = 5-phospho-alpha-D-ribose 1-diphosphate + AMP + H(+). Its pathway is metabolic intermediate biosynthesis; 5-phospho-alpha-D-ribose 1-diphosphate biosynthesis; 5-phospho-alpha-D-ribose 1-diphosphate from D-ribose 5-phosphate (route I): step 1/1. Activated by magnesium and inorganic phosphate. Catalyzes the synthesis of phosphoribosylpyrophosphate (PRPP) that is essential for nucleotide synthesis. The protein is Ribose-phosphate pyrophosphokinase 3 (PRPS1L1) of Homo sapiens (Human).